The primary structure comprises 76 residues: Putative Fe(2+) transport protein A (76 aa).

The protein belongs to the FeoA family.

Functionally, might be involved in Fe(2+) ion uptake. This Helicobacter pylori (strain ATCC 700392 / 26695) (Campylobacter pylori) protein is Putative Fe(2+) transport protein A.